The chain runs to 424 residues: FeMo cofactor biosynthesis protein NifB (424 aa).

One can recognise a Radical SAM core domain in the interval 12–261 (NDSSRHTYGR…PQMKHCARCR (250 aa)). Cys30, Cys34, and Cys37 together coordinate [4Fe-4S] cluster. Residues Gly84, Thr136, and Val188 each coordinate S-adenosyl-L-methionine. Residues Cys257 and Cys260 each coordinate [4Fe-4S] cluster.

It belongs to the radical SAM superfamily. NifB family. In terms of assembly, monomer. Requires [4Fe-4S] cluster as cofactor.

Its pathway is cofactor biosynthesis; Fe-Mo cofactor biosynthesis. Its function is as follows. Involved in the biosynthesis of the iron-molybdenum cofactor (FeMo-co or M-cluster) found in the dinitrogenase enzyme of the nitrogenase complex in nitrogen-fixing microorganisms. NifB catalyzes the crucial step of radical SAM-dependent carbide insertion that occurs concomitant with the insertion of a 9th sulfur and the rearrangement/coupling of two [4Fe-4S] clusters into a [8Fe-9S-C] cluster, the precursor to the M-cluster. The sequence is that of FeMo cofactor biosynthesis protein NifB from Chlorobaculum tepidum (strain ATCC 49652 / DSM 12025 / NBRC 103806 / TLS) (Chlorobium tepidum).